A 163-amino-acid polypeptide reads, in one-letter code: Type II secretion system protein M (163 aa).

The Cytoplasmic segment spans residues 1–19 (MMDKLQGWWRSISAREQRL). Residues 20 to 40 (VAVGGSCLLIGFCYWIVWQPI) form a helical membrane-spanning segment. The Periplasmic segment spans residues 41–163 (ANRIAERERQ…VRRLQLSRPQ (123 aa)).

It belongs to the GSP M family. In terms of assembly, type II secretion system is composed of four main components: the outer membrane complex, the inner membrane complex, the cytoplasmic secretion ATPase and the periplasm-spanning pseudopilus. Forms homodimers. Interacts with ExeL/GspL. Interacts with ExeE/GspE and ExeF/GspF.

The protein localises to the cell inner membrane. Functionally, inner membrane component of the type II secretion system required for the energy-dependent secretion of extracellular factors such as proteases and toxins from the periplasm. Plays a role in the complex assembly and recruits ExeL resulting in a stable complex in the inner membrane. Provides thus a link between the energy-providing ExeE protein in the cytoplasm and the rest of the T2SS machinery. This Aeromonas hydrophila protein is Type II secretion system protein M (exeM).